The sequence spans 154 residues: Probable biofilm-surface layer protein B (154 aa).

Residues Met1–Ala30 form the signal peptide.

This sequence belongs to the BslA/BslB family. Monomer in vitro.

It localises to the secreted. Has a minor role in biofilm architecture. May contribute to the surface hydrophobicity. This is Probable biofilm-surface layer protein B from Bacillus subtilis (strain 168).